The primary structure comprises 228 residues: Homeobox protein Hox-B6a (228 aa).

An Antp-type hexapeptide motif is present at residues 132–137 (VYPWMQ). The segment at residues 150–209 (GRRGRQTYTRYQTLELEKEFHFNRYLTRRRRIEIAHALCLTERQIKIWFQNRRMKWKKEN) is a DNA-binding region (homeobox).

It belongs to the Antp homeobox family.

The protein resides in the nucleus. In terms of biological role, sequence-specific transcription factor which is part of a developmental regulatory system that provides cells with specific positional identities on the anterior-posterior axis. The chain is Homeobox protein Hox-B6a (hoxb6a) from Danio rerio (Zebrafish).